Reading from the N-terminus, the 190-residue chain is MYTALQKIHKDKDAEPTEFEENVAQALFDFENTNQEIKSDLKDLYINSALQIDVSGGKKAVVIHVPYRLRKSFRKIHPRLVRELEKKFSGKEVVLIATRRILRPPKKGSAVQRPRSRTLTAVHDAMLEDIVYPAEIVGKRVRYRLDGSKIMKVFLDPKAKNDTENKLETFAGVYRKLSGKDVVFEFPLTE.

It belongs to the eukaryotic ribosomal protein eS7 family.

The chain is Small ribosomal subunit protein eS7 (RPS7) from Avicennia marina (Grey mangrove).